The chain runs to 359 residues: Phosphoserine aminotransferase (359 aa).

2 residues coordinate L-glutamate: serine 9 and arginine 42. Residues 76 to 77 (AS), tryptophan 102, threonine 152, aspartate 171, and glutamine 194 each bind pyridoxal 5'-phosphate. The residue at position 195 (lysine 195) is an N6-(pyridoxal phosphate)lysine. Residue 236–237 (NT) participates in pyridoxal 5'-phosphate binding.

It belongs to the class-V pyridoxal-phosphate-dependent aminotransferase family. SerC subfamily. As to quaternary structure, homodimer. Pyridoxal 5'-phosphate serves as cofactor.

It is found in the cytoplasm. It carries out the reaction O-phospho-L-serine + 2-oxoglutarate = 3-phosphooxypyruvate + L-glutamate. It catalyses the reaction 4-(phosphooxy)-L-threonine + 2-oxoglutarate = (R)-3-hydroxy-2-oxo-4-phosphooxybutanoate + L-glutamate. It functions in the pathway amino-acid biosynthesis; L-serine biosynthesis; L-serine from 3-phospho-D-glycerate: step 2/3. Its pathway is cofactor biosynthesis; pyridoxine 5'-phosphate biosynthesis; pyridoxine 5'-phosphate from D-erythrose 4-phosphate: step 3/5. Catalyzes the reversible conversion of 3-phosphohydroxypyruvate to phosphoserine and of 3-hydroxy-2-oxo-4-phosphonooxybutanoate to phosphohydroxythreonine. In Marinomonas sp. (strain MWYL1), this protein is Phosphoserine aminotransferase.